The sequence spans 148 residues: D-aminoacyl-tRNA deacylase (148 aa).

The short motif at 137 to 138 (GP) is the Gly-cisPro motif, important for rejection of L-amino acids element.

The protein belongs to the DTD family. As to quaternary structure, homodimer.

It is found in the cytoplasm. It catalyses the reaction glycyl-tRNA(Ala) + H2O = tRNA(Ala) + glycine + H(+). It carries out the reaction a D-aminoacyl-tRNA + H2O = a tRNA + a D-alpha-amino acid + H(+). In terms of biological role, an aminoacyl-tRNA editing enzyme that deacylates mischarged D-aminoacyl-tRNAs. Also deacylates mischarged glycyl-tRNA(Ala), protecting cells against glycine mischarging by AlaRS. Acts via tRNA-based rather than protein-based catalysis; rejects L-amino acids rather than detecting D-amino acids in the active site. By recycling D-aminoacyl-tRNA to D-amino acids and free tRNA molecules, this enzyme counteracts the toxicity associated with the formation of D-aminoacyl-tRNA entities in vivo and helps enforce protein L-homochirality. The protein is D-aminoacyl-tRNA deacylase of Ligilactobacillus salivarius (strain UCC118) (Lactobacillus salivarius).